Reading from the N-terminus, the 158-residue chain is Cyclic pyranopterin monophosphate synthase (158 aa).

Residues 76-78 and 114-115 contribute to the substrate site; these read LCH and ME. Residue Asp-129 is part of the active site.

This sequence belongs to the MoaC family. In terms of assembly, homohexamer; trimer of dimers.

It carries out the reaction (8S)-3',8-cyclo-7,8-dihydroguanosine 5'-triphosphate = cyclic pyranopterin phosphate + diphosphate. The protein operates within cofactor biosynthesis; molybdopterin biosynthesis. Its function is as follows. Catalyzes the conversion of (8S)-3',8-cyclo-7,8-dihydroguanosine 5'-triphosphate to cyclic pyranopterin monophosphate (cPMP). The chain is Cyclic pyranopterin monophosphate synthase from Shewanella halifaxensis (strain HAW-EB4).